Consider the following 453-residue polypeptide: Potassium/proton antiporter CemA (453 aa).

The next 4 membrane-spanning stretches (helical) occupy residues 235-255 (YMACLIFLPWVFSTICKIIFL), 328-348 (ICTILNLLTDWISITCLACLL), 378-398 (ILLLTDLCIGFHSPHGWEIII), and 414-434 (VSCFVSTFPVILDTVLKYWIF).

The protein belongs to the CemA family.

The protein localises to the plastid. It localises to the chloroplast inner membrane. It carries out the reaction K(+)(in) + H(+)(out) = K(+)(out) + H(+)(in). In terms of biological role, contributes to K(+)/H(+) antiport activity by supporting proton efflux to control proton extrusion and homeostasis in chloroplasts in a light-dependent manner to modulate photosynthesis. Prevents excessive induction of non-photochemical quenching (NPQ) under continuous-light conditions. Indirectly promotes efficient inorganic carbon uptake into chloroplasts. This is Potassium/proton antiporter CemA from Zygnema circumcarinatum (Green alga).